A 317-amino-acid polypeptide reads, in one-letter code: Gluconeogenesis factor (317 aa).

It belongs to the gluconeogenesis factor family.

The protein localises to the cytoplasm. Required for morphogenesis under gluconeogenic growth conditions. Required, in gluconeogenic growth conditions, for the correct localization of PBP1 and hence for displaying a normal rod shape. The protein is Gluconeogenesis factor (mgfK) of Bacillus subtilis (strain 168).